Reading from the N-terminus, the 379-residue chain is L-lactate dehydrogenase (379 aa).

The 379-residue stretch at 1–379 (MIISASTDYR…IGRDSLVNLP (379 aa)) folds into the FMN hydroxy acid dehydrogenase domain. Tyr-24 is a binding site for substrate. FMN is bound by residues Ser-106 and Gln-127. Position 129 (Tyr-129) interacts with substrate. Thr-155 serves as a coordination point for FMN. Arg-164 provides a ligand contact to substrate. Lys-251 contacts FMN. The active-site Proton acceptor is His-275. Arg-278 is a substrate binding site. 306-330 (DSGIRTGLDVVRMLALGADTVLLGR) contacts FMN.

Belongs to the FMN-dependent alpha-hydroxy acid dehydrogenase family. It depends on FMN as a cofactor.

It is found in the cell inner membrane. It carries out the reaction (S)-lactate + A = pyruvate + AH2. Its function is as follows. Catalyzes the conversion of L-lactate to pyruvate. Is coupled to the respiratory chain. The protein is L-lactate dehydrogenase of Stenotrophomonas maltophilia (strain R551-3).